Reading from the N-terminus, the 185-residue chain is Ribosome-recycling factor (185 aa).

Belongs to the RRF family.

Its subcellular location is the cytoplasm. Responsible for the release of ribosomes from messenger RNA at the termination of protein biosynthesis. May increase the efficiency of translation by recycling ribosomes from one round of translation to another. This Syntrophobacter fumaroxidans (strain DSM 10017 / MPOB) protein is Ribosome-recycling factor.